Here is a 780-residue protein sequence, read N- to C-terminus: Cullin-1 (780 aa).

One can recognise a Cullin neddylation domain in the interval 710-771 (DRKSVISACI…EKEYMLRTEG (62 aa)). A Glycyl lysine isopeptide (Lys-Gly) (interchain with G-Cter in NEDD8) cross-link involves residue K724.

Belongs to the cullin family. As to quaternary structure, component of an SCF (SKP1-CUL1-F-box protein) E3 ubiquitin ligase complex composed of cul-1, fsn-1, rpm-1 and skr-1. Interacts with Skp1-related proteins skr-1, skr-2, skr-3, skr-4, skr-7, skr-8, skr-9 and skr-10. Neddylated; which enhances the ubiquitination activity of SCF. As to expression, ubiquitous.

It is found in the cytoplasm. It participates in protein modification; protein ubiquitination. Probable core component of multiple cullin-RING-based SCF (SKP1-CUL1-F-box) E3 ubiquitin-protein ligase complexes which mediate the ubiquitination and subsequent proteasomal degradation of target proteins. As a scaffold protein may contribute to catalysis through positioning of the substrate and the ubiquitin-conjugating enzyme. Required for developmentally programmed transitions from the G1 phase of the cell cycle to the G0 phase or the apoptotic pathway. In Caenorhabditis elegans, this protein is Cullin-1 (cul-1).